Here is a 31-residue protein sequence, read N- to C-terminus: Photosystem II reaction center protein T (31 aa).

A helical membrane pass occupies residues 3–23 (ALVYTFLLIGTLGIIFFAIFF).

The protein belongs to the PsbT family. PSII is composed of 1 copy each of membrane proteins PsbA, PsbB, PsbC, PsbD, PsbE, PsbF, PsbH, PsbI, PsbJ, PsbK, PsbL, PsbM, PsbT, PsbY, PsbZ, Psb30/Ycf12, at least 3 peripheral proteins of the oxygen-evolving complex and a large number of cofactors. It forms dimeric complexes.

The protein resides in the plastid. It is found in the chloroplast thylakoid membrane. Found at the monomer-monomer interface of the photosystem II (PS II) dimer, plays a role in assembly and dimerization of PSII. PSII is a light-driven water plastoquinone oxidoreductase, using light energy to abstract electrons from H(2)O, generating a proton gradient subsequently used for ATP formation. This chain is Photosystem II reaction center protein T, found in Tetradesmus obliquus (Green alga).